We begin with the raw amino-acid sequence, 206 residues long: Small ribosomal subunit protein uS4 (206 aa).

The S4 RNA-binding domain occupies 96–156 (TRLDNVVYRM…EKSRTQARIK (61 aa)).

It belongs to the universal ribosomal protein uS4 family. Part of the 30S ribosomal subunit. Contacts protein S5. The interaction surface between S4 and S5 is involved in control of translational fidelity.

Its function is as follows. One of the primary rRNA binding proteins, it binds directly to 16S rRNA where it nucleates assembly of the body of the 30S subunit. In terms of biological role, with S5 and S12 plays an important role in translational accuracy. In Shewanella amazonensis (strain ATCC BAA-1098 / SB2B), this protein is Small ribosomal subunit protein uS4.